The primary structure comprises 158 residues: NAD(P)H-quinone oxidoreductase subunit J, chloroplastic (158 aa).

It belongs to the complex I 30 kDa subunit family. As to quaternary structure, NDH is composed of at least 16 different subunits, 5 of which are encoded in the nucleus.

The protein localises to the plastid. It localises to the chloroplast thylakoid membrane. It catalyses the reaction a plastoquinone + NADH + (n+1) H(+)(in) = a plastoquinol + NAD(+) + n H(+)(out). The catalysed reaction is a plastoquinone + NADPH + (n+1) H(+)(in) = a plastoquinol + NADP(+) + n H(+)(out). In terms of biological role, NDH shuttles electrons from NAD(P)H:plastoquinone, via FMN and iron-sulfur (Fe-S) centers, to quinones in the photosynthetic chain and possibly in a chloroplast respiratory chain. The immediate electron acceptor for the enzyme in this species is believed to be plastoquinone. Couples the redox reaction to proton translocation, and thus conserves the redox energy in a proton gradient. The polypeptide is NAD(P)H-quinone oxidoreductase subunit J, chloroplastic (Aethionema cordifolium (Lebanon stonecress)).